The following is a 243-amino-acid chain: Tyrosine recombinase XerD-like (243 aa).

In terms of domain architecture, Core-binding (CB) spans 1–72 (MKEYIRPFLN…AVNQFLYFLY (72 aa)). Residues 85 to 243 (LPKVSVSKEQ…KTMITLEKYR (159 aa)) form the Tyr recombinase domain. Catalysis depends on residues lysine 149 and arginine 210. Tyrosine 242 serves as the catalytic O-(3'-phospho-DNA)-tyrosine intermediate.

Belongs to the 'phage' integrase family. XerD-like subfamily.

Its subcellular location is the cytoplasm. Putative tyrosine recombinase. Not involved in the cutting and rejoining of the recombining DNA molecules on dif(SL) site. The polypeptide is Tyrosine recombinase XerD-like (Streptococcus sanguinis (strain SK36)).